We begin with the raw amino-acid sequence, 137 residues long: Basic phospholipase A2 homolog APL-K49 (137 aa).

The signal sequence occupies residues 1-16 (MRTLWIVALLLVGVEG). 7 cysteine pairs are disulfide-bonded: C42-C131, C44-C60, C59-C111, C65-C137, C66-C104, C73-C97, and C91-C102. The tract at residues 121–133 (KKYKAYFKLKCKK) is important for membrane-damaging activities in eukaryotes and bacteria; heparin-binding.

Belongs to the phospholipase A2 family. Group II subfamily. K49 sub-subfamily. In terms of assembly, monomer. Expressed by the venom gland.

It is found in the secreted. Functionally, snake venom phospholipase A2 (PLA2) that lacks enzymatic activity. Does not show antibacterial activity. Is myotoxic and displays edema-inducing activities. A model of myotoxic mechanism has been proposed: an apo Lys49-PLA2 is activated by the entrance of a hydrophobic molecule (e.g. fatty acid) at the hydrophobic channel of the protein leading to a reorientation of a monomer. This reorientation causes a transition between 'inactive' to 'active' states, causing alignment of C-terminal and membrane-docking sites (MDoS) side-by-side and putting the membrane-disruption sites (MDiS) in the same plane, exposed to solvent and in a symmetric position for both monomers. The MDoS region stabilizes the toxin on membrane by the interaction of charged residues with phospholipid head groups. Subsequently, the MDiS region destabilizes the membrane with penetration of hydrophobic residues. This insertion causes a disorganization of the membrane, allowing an uncontrolled influx of ions (i.e. calcium and sodium), and eventually triggering irreversible intracellular alterations and cell death. This Agkistrodon piscivorus leucostoma (Western cottonmouth) protein is Basic phospholipase A2 homolog APL-K49.